The following is an 89-amino-acid chain: Small ribosomal subunit protein uS15 (89 aa).

Belongs to the universal ribosomal protein uS15 family. In terms of assembly, part of the 30S ribosomal subunit. Forms a bridge to the 50S subunit in the 70S ribosome, contacting the 23S rRNA.

One of the primary rRNA binding proteins, it binds directly to 16S rRNA where it helps nucleate assembly of the platform of the 30S subunit by binding and bridging several RNA helices of the 16S rRNA. Functionally, forms an intersubunit bridge (bridge B4) with the 23S rRNA of the 50S subunit in the ribosome. The chain is Small ribosomal subunit protein uS15 from Pasteurella multocida (strain Pm70).